Consider the following 291-residue polypeptide: G1/S-specific cyclin-D1 (291 aa).

Thr-282 bears the Phosphothreonine mark.

This sequence belongs to the cyclin family. Cyclin D subfamily. As to quaternary structure, interacts with the cdk4 and cdk6 protein kinases to form a serine/threonine kinase holoenzyme complex. The cyclin subunit imparts substrate specificity to the complex. In terms of processing, phosphorylation at Thr-282 by MAP kinases is required for ubiquitination and degradation by the DCX(AMBRA1) complex. Post-translationally, ubiquitinated by the DCX(AMBRA1) complex during the transition from G1 to S cell phase, leading to its degradation. The DCX(AMBRA1) complex represents the major regulator of CCND1 stability during the G1/S transition.

It is found in the nucleus. The protein localises to the cytoplasm. Its function is as follows. Regulatory component of the cyclin D1-CDK4 (DC) complex that phosphorylates and inhibits members of the retinoblastoma (RB) protein family including RB1 and regulates the cell-cycle during G(1)/S transition. Phosphorylation of RB1 allows dissociation of the transcription factor E2F from the RB/E2F complex and the subsequent transcription of E2F target genes which are responsible for the progression through the G(1) phase. Hypophosphorylates RB1 in early G(1) phase. Cyclin D-CDK4 complexes are major integrators of various mitogenenic and antimitogenic signals. This chain is G1/S-specific cyclin-D1 (ccnd1), found in Xenopus laevis (African clawed frog).